The sequence spans 228 residues: Histidine/lysine/arginine/ornithine transport system permease protein HisQ (228 aa).

Over 1–12 the chain is Periplasmic; that stretch reads MLYGFSGVILQG. A helical transmembrane segment spans residues 13–33; it reads AIVTLELALSSVVLAVLIGLV. Residues 13–212 enclose the ABC transmembrane type-1 domain; sequence AIVTLELALS…VFTTVSNGVL (200 aa). The Cytoplasmic segment spans residues 34–58; it reads GAGAKLSQNRVTGLIFEGYTTLIRG. The chain crosses the membrane as a helical span at residues 59 to 79; it reads VPDLVLMLLIFYGLQIALNVV. Over 80 to 87 the chain is Periplasmic; sequence TDSLGIDQ. Residues 88–108 form a helical membrane-spanning segment; the sequence is IDIDPMVAGIITLGFIYGAYF. At 109–152 the chain is on the cytoplasmic side; sequence TETFRGAFMAVPKGHIEAATAFGFTHGQTFRRIMFPAMMRYALP. The chain crosses the membrane as a helical span at residues 153–173; the sequence is GIGNNWQVILKATALVSLLGL. Residues 174–194 lie on the Periplasmic side of the membrane; sequence EDVVKATQLAGKSTWEPFYFA. The chain crosses the membrane as a helical span at residues 195 to 215; it reads VVCGLIYLVFTTVSNGVLLLL. Over 216-228 the chain is Cytoplasmic; it reads ERRYSVGVKRADL.

The protein belongs to the binding-protein-dependent transport system permease family. HisMQ subfamily. As to quaternary structure, the HisPMQJ complex is composed of two ATP-binding proteins (HisP), two transmembrane proteins (HisM and HisQ) and a solute-binding protein (HisJ). The HisPMQ-ArgT complex is composed of two ATP-binding proteins (HisP), two transmembrane proteins (HisM and HisQ) and a solute-binding protein (ArgT).

The protein localises to the cell inner membrane. Part of the ABC transporter complex HisPMQJ involved in histidine transport. Is also part of the ABC transporter complex HisPMQ-ArgT involved in lysine/arginine/ornithine transport. Probably responsible for the translocation of the substrate across the membrane. The sequence is that of Histidine/lysine/arginine/ornithine transport system permease protein HisQ (hisQ) from Salmonella typhi.